Reading from the N-terminus, the 357-residue chain is Alanine racemase (357 aa).

The active-site Proton acceptor; specific for D-alanine is the K33. K33 is modified (N6-(pyridoxal phosphate)lysine). Position 129 (R129) interacts with substrate. The active-site Proton acceptor; specific for L-alanine is Y253. M301 is a binding site for substrate.

Belongs to the alanine racemase family. It depends on pyridoxal 5'-phosphate as a cofactor.

It carries out the reaction L-alanine = D-alanine. It participates in amino-acid biosynthesis; D-alanine biosynthesis; D-alanine from L-alanine: step 1/1. Catalyzes the interconversion of L-alanine and D-alanine. May also act on other amino acids. This is Alanine racemase (alr) from Pseudomonas syringae pv. syringae (strain B728a).